Consider the following 100-residue polypeptide: Large ribosomal subunit protein uL23 (100 aa).

The protein belongs to the universal ribosomal protein uL23 family. As to quaternary structure, part of the 50S ribosomal subunit. Contacts protein L29, and trigger factor when it is bound to the ribosome.

Functionally, one of the early assembly proteins it binds 23S rRNA. One of the proteins that surrounds the polypeptide exit tunnel on the outside of the ribosome. Forms the main docking site for trigger factor binding to the ribosome. The protein is Large ribosomal subunit protein uL23 of Prochlorococcus marinus (strain AS9601).